The following is a 487-amino-acid chain: Probable cobyric acid synthase (487 aa).

The GATase cobBQ-type domain maps to 249 to 435 (DVDIAVVRFP…LHGIFNNASF (187 aa)). Catalysis depends on C328, which acts as the Nucleophile. The active site involves H427.

Belongs to the CobB/CobQ family. CobQ subfamily.

Its pathway is cofactor biosynthesis; adenosylcobalamin biosynthesis. In terms of biological role, catalyzes amidations at positions B, D, E, and G on adenosylcobyrinic A,C-diamide. NH(2) groups are provided by glutamine, and one molecule of ATP is hydrogenolyzed for each amidation. This chain is Probable cobyric acid synthase, found in Methanocella arvoryzae (strain DSM 22066 / NBRC 105507 / MRE50).